The chain runs to 118 residues: Ribosome-binding factor A (118 aa).

The protein belongs to the RbfA family. Monomer. Binds 30S ribosomal subunits, but not 50S ribosomal subunits or 70S ribosomes.

The protein resides in the cytoplasm. Its function is as follows. One of several proteins that assist in the late maturation steps of the functional core of the 30S ribosomal subunit. Associates with free 30S ribosomal subunits (but not with 30S subunits that are part of 70S ribosomes or polysomes). Required for efficient processing of 16S rRNA. May interact with the 5'-terminal helix region of 16S rRNA. The protein is Ribosome-binding factor A of Bacillus anthracis (strain A0248).